The primary structure comprises 95 residues: Putative regulatory protein STH1338 (95 aa).

The protein belongs to the RemA family.

In Symbiobacterium thermophilum (strain DSM 24528 / JCM 14929 / IAM 14863 / T), this protein is Putative regulatory protein STH1338.